The following is a 92-amino-acid chain: Small ribosomal subunit protein uS19 (92 aa).

Belongs to the universal ribosomal protein uS19 family.

Its function is as follows. Protein S19 forms a complex with S13 that binds strongly to the 16S ribosomal RNA. The sequence is that of Small ribosomal subunit protein uS19 from Vibrio vulnificus (strain CMCP6).